The following is a 219-amino-acid chain: PKHD-type hydroxylase AM1_3707 (219 aa).

The Fe2OG dioxygenase domain maps to 78–172; sequence SIHTLLFSRY…RLVAVGWVQS (95 aa). 3 residues coordinate Fe cation: His96, Asp98, and His153. Arg163 contacts 2-oxoglutarate.

It depends on Fe(2+) as a cofactor. L-ascorbate serves as cofactor.

The protein is PKHD-type hydroxylase AM1_3707 of Acaryochloris marina (strain MBIC 11017).